The primary structure comprises 345 residues: Histidinol-phosphate aminotransferase (345 aa).

Lys206 carries the N6-(pyridoxal phosphate)lysine modification.

This sequence belongs to the class-II pyridoxal-phosphate-dependent aminotransferase family. Histidinol-phosphate aminotransferase subfamily. As to quaternary structure, homodimer. Requires pyridoxal 5'-phosphate as cofactor.

The catalysed reaction is L-histidinol phosphate + 2-oxoglutarate = 3-(imidazol-4-yl)-2-oxopropyl phosphate + L-glutamate. The protein operates within amino-acid biosynthesis; L-histidine biosynthesis; L-histidine from 5-phospho-alpha-D-ribose 1-diphosphate: step 7/9. The polypeptide is Histidinol-phosphate aminotransferase (Bacteroides fragilis (strain ATCC 25285 / DSM 2151 / CCUG 4856 / JCM 11019 / LMG 10263 / NCTC 9343 / Onslow / VPI 2553 / EN-2)).